The chain runs to 224 residues: UPF0758 protein mma_2551 (224 aa).

Positions 102–224 constitute an MPN domain; that stretch reads SLNSPQAVKK…VYSFAEHGHL (123 aa). His-173, His-175, and Asp-186 together coordinate Zn(2+). Residues 173–186 carry the JAMM motif motif; sequence HNHPSGSSEPSAAD.

The protein belongs to the UPF0758 family.

The polypeptide is UPF0758 protein mma_2551 (Janthinobacterium sp. (strain Marseille) (Minibacterium massiliensis)).